Consider the following 105-residue polypeptide: ATP-dependent Clp protease adapter protein ClpS (105 aa).

Belongs to the ClpS family. As to quaternary structure, binds to the N-terminal domain of the chaperone ClpA.

Functionally, involved in the modulation of the specificity of the ClpAP-mediated ATP-dependent protein degradation. This is ATP-dependent Clp protease adapter protein ClpS from Aeromonas hydrophila subsp. hydrophila (strain ATCC 7966 / DSM 30187 / BCRC 13018 / CCUG 14551 / JCM 1027 / KCTC 2358 / NCIMB 9240 / NCTC 8049).